Consider the following 185-residue polypeptide: uncharacterized protein (185 aa).

This is an uncharacterized protein from Acanthamoeba polyphaga (Amoeba).